Consider the following 704-residue polypeptide: Elongation factor G 1 (704 aa).

Positions 8-291 constitute a tr-type G domain; sequence ERYRNIGISA…AVIDYLPSPA (284 aa). GTP is bound by residues 17-24, 88-92, and 142-145; these read AHIDAGKT, DTPGH, and NKMD.

The protein belongs to the TRAFAC class translation factor GTPase superfamily. Classic translation factor GTPase family. EF-G/EF-2 subfamily.

The protein resides in the cytoplasm. Functionally, catalyzes the GTP-dependent ribosomal translocation step during translation elongation. During this step, the ribosome changes from the pre-translocational (PRE) to the post-translocational (POST) state as the newly formed A-site-bound peptidyl-tRNA and P-site-bound deacylated tRNA move to the P and E sites, respectively. Catalyzes the coordinated movement of the two tRNA molecules, the mRNA and conformational changes in the ribosome. In Burkholderia thailandensis (strain ATCC 700388 / DSM 13276 / CCUG 48851 / CIP 106301 / E264), this protein is Elongation factor G 1.